A 221-amino-acid polypeptide reads, in one-letter code: 3-isopropylmalate dehydratase small subunit (221 aa).

The protein belongs to the LeuD family. LeuD type 1 subfamily. In terms of assembly, heterodimer of LeuC and LeuD.

The catalysed reaction is (2R,3S)-3-isopropylmalate = (2S)-2-isopropylmalate. It participates in amino-acid biosynthesis; L-leucine biosynthesis; L-leucine from 3-methyl-2-oxobutanoate: step 2/4. In terms of biological role, catalyzes the isomerization between 2-isopropylmalate and 3-isopropylmalate, via the formation of 2-isopropylmaleate. The polypeptide is 3-isopropylmalate dehydratase small subunit (Nitrosomonas europaea (strain ATCC 19718 / CIP 103999 / KCTC 2705 / NBRC 14298)).